Consider the following 692-residue polypeptide: FMR1-interacting protein NUFIP2 (692 aa).

A disordered region spans residues methionine 1–glycine 100. Basic residues-rich tracts occupy residues glutamine 11–proline 23 and serine 31–glutamine 54. Residue lysine 79 forms a Glycyl lysine isopeptide (Lys-Gly) (interchain with G-Cter in SUMO2) linkage. A Phosphothreonine modification is found at threonine 88. Lysine 110 is covalently cross-linked (Glycyl lysine isopeptide (Lys-Gly) (interchain with G-Cter in SUMO2)). A phosphoserine mark is found at serine 113 and serine 114. Glycyl lysine isopeptide (Lys-Gly) (interchain with G-Cter in SUMO2) cross-links involve residues lysine 137, lysine 147, lysine 158, and lysine 172. Positions serine 205 to lysine 233 are disordered. Phosphoserine is present on residues serine 213 and serine 215. Tyrosine 219 carries the post-translational modification Phosphotyrosine. Threonine 220 and threonine 221 each carry phosphothreonine. A compositionally biased stretch (basic residues) spans proline 222–serine 231. Glycyl lysine isopeptide (Lys-Gly) (interchain with G-Cter in SUMO2) cross-links involve residues lysine 262 and lysine 281. 2 disordered regions span residues lysine 277–phenylalanine 337 and threonine 369–proline 401. Arginine 291 carries the post-translational modification Omega-N-methylarginine. A Glycyl lysine isopeptide (Lys-Gly) (interchain with G-Cter in SUMO2) cross-link involves residue lysine 293. Phosphoserine is present on serine 304. Lysine 307 is covalently cross-linked (Glycyl lysine isopeptide (Lys-Gly) (interchain with G-Cter in SUMO2)). Residues glutamine 371–serine 395 are compositionally biased toward low complexity. Serine 376 bears the Phosphoserine mark. Threonine 569 carries the post-translational modification Phosphothreonine. Serine 570, serine 589, serine 605, and serine 626 each carry phosphoserine. Phosphothreonine is present on threonine 630. A phosphoserine mark is found at serine 634, serine 649, serine 652, and serine 689.

As to quaternary structure, interacts with FMR1 (via N-terminus). Interacts with DDX6.

The protein resides in the nucleus. The protein localises to the cytoplasm. Its subcellular location is the stress granule. In terms of biological role, binds RNA. In Mus musculus (Mouse), this protein is FMR1-interacting protein NUFIP2 (Nufip2).